The sequence spans 683 residues: Leucine-rich repeat protein soc-2 homolog (683 aa).

Over residues 1–19 (MNLCSSGATASTTSLSSTG) the composition is skewed to low complexity. 2 disordered regions span residues 1–54 (MNLC…SDVS) and 74–150 (GTDE…IQAD). The span at 26-49 (GVPGGGAEGGGGGGGSGNSGGGGK) shows a compositional bias: gly residues. Residues 74–86 (GTDELSNANSPAN) are compositionally biased toward low complexity. The segment covering 99-117 (QQPTGSNGHSHLHNENNAN) has biased composition (polar residues). 20 LRR repeats span residues 164–185 (GIKRLDLSKSSITVIPSTVKEC), 187–208 (HLTELYLYSNKIGQLPPEIGCL), 210–231 (SLRNLALNENSLTSLPESLQNC), 233–254 (QLKVLDLRHNKLAEIPSVIYRL), 256–277 (SLTTLYLRFNRITAVADDLRQL), 279–300 (NLTMLSLRENKIRELGSAIGAL), 302–323 (NLTTLDVSHNHLEHLPEDIGNC), 325–346 (NLSALDLQHNELLDIPDSIGNL), 348–370 (SLVRLGMRYNRLSSVPATLKNCK), 371–392 (SMDEFNVEGNGITQLPDGMLAS), 395–416 (GLTTITLSRNQFASYPTGGPAQ), 419–440 (NVYSINLEHNRIDKIPYGIFSR), 443–464 (GLTKLNMKENMLTALPLDIGTW), 466–487 (NMVELNLATNALQKLPDDIMNL), 489–510 (NLEILILSNNMLKKIPNTIGNL), 512–533 (RLRILDLEENRIEVLPHEIGLL), 535–556 (ELQRLILQTNQITMLPRSIGHL), 558–579 (NLTHLSVSENNLQFLPEEIGSL), 581–603 (SLENLYINQNPGLEKLPFELALC), and 605–626 (NLKYLNIDKCPLSTIPPEIQAG). The span at 661–671 (AGGNGGGGAAA) shows a compositional bias: gly residues. The tract at residues 661–683 (AGGNGGGGAAAAGGSASRSSDRR) is disordered. Low complexity predominate over residues 672–683 (AGGSASRSSDRR).

The protein belongs to the SHOC2 family.

Functionally, acts as a Ras effector and participates in MAPK pathway activation. Probably acts as a regulatory subunit of protein phosphatase that specifically dephosphorylates Raf kinase and stimulate Raf activity at specialized signaling complexes upon Ras activation. This chain is Leucine-rich repeat protein soc-2 homolog (Sur-8), found in Drosophila sechellia (Fruit fly).